The sequence spans 452 residues: Pup--protein ligase (452 aa).

E9 is a Mg(2+) binding site. R53 is a binding site for ATP. Y55 provides a ligand contact to Mg(2+). The active-site Proton acceptor is the D57. E63 lines the Mg(2+) pocket. 2 residues coordinate ATP: T66 and W419.

The protein belongs to the Pup ligase/Pup deamidase family. Pup-conjugating enzyme subfamily.

It carries out the reaction ATP + [prokaryotic ubiquitin-like protein]-L-glutamate + [protein]-L-lysine = ADP + phosphate + N(6)-([prokaryotic ubiquitin-like protein]-gamma-L-glutamyl)-[protein]-L-lysine.. Its pathway is protein degradation; proteasomal Pup-dependent pathway. It participates in protein modification; protein pupylation. Its function is as follows. Catalyzes the covalent attachment of the prokaryotic ubiquitin-like protein modifier Pup to the proteasomal substrate proteins, thereby targeting them for proteasomal degradation. This tagging system is termed pupylation. The ligation reaction involves the side-chain carboxylate of the C-terminal glutamate of Pup and the side-chain amino group of a substrate lysine. This Frankia alni (strain DSM 45986 / CECT 9034 / ACN14a) protein is Pup--protein ligase.